We begin with the raw amino-acid sequence, 1073 residues long: Ring-infected erythrocyte surface antigen (1073 aa).

Residues Met1–Asn65 form the signal peptide. N-linked (GlcNAc...) asparagine glycosylation is present at Asn71. The span at Asp428–Val444 shows a compositional bias: acidic residues. A disordered region spans residues Asp428–Ala514. Positions Glu436–Ala504 are tandem repeats 1. Residues Asp445–Asp456 show a composition bias toward basic and acidic residues. The span at Glu457–Val470 shows a compositional bias: acidic residues. Residues Ala476–Glu502 are compositionally biased toward basic and acidic residues. Positions Asp521–Asp589 constitute a J domain. N-linked (GlcNAc...) asparagine glycosylation is found at Asn639, Asn773, and Asn777. Residues Asn891–Glu1073 form a tandem repeats 2 region. Residues Glu894–His930 show a composition bias toward basic and acidic residues. The interval Glu894–Glu1073 is disordered. The segment covering Asp931–Glu1073 has biased composition (acidic residues).

In terms of processing, the Tyr residues in the variant tetrameric sequences in the RESA repeat are possibly phosphorylated (by homology with band 3).

The protein resides in the cell membrane. Functionally, may disrupt the normal intermolecular interactions of the cytoplasmic domain of band 3 and thereby facilitate the invagination of the red cell membrane which is necessary for the formation of the parasitophorous vacuole. This is Ring-infected erythrocyte surface antigen (RESA) from Plasmodium falciparum (isolate FC27 / Papua New Guinea).